Reading from the N-terminus, the 131-residue chain is MHNTLLEKIIAYLSLPGFHSLNNPPLSEAFNLYVHTAPLAATSLFIFTHKELELKPKSSPLRALKILTPFTILYISMIYCFLLTDTELTLSSKTFVLIVKKRSVFVFFLYNTIYWDIYIHIFVLLVPYRNI.

Helical transmembrane passes span 66 to 84 (ILTP…FLLT) and 104 to 124 (VFVF…IFVL).

The protein localises to the cell membrane. In Escherichia coli, this protein is Colicin-N immunity protein (cni).